We begin with the raw amino-acid sequence, 346 residues long: Extracellular protease (346 aa).

Residues 1–21 (MMKATPIALLLAGVLASPLCA) form the signal peptide. His296 provides a ligand contact to Zn(2+). Glu297 is an active-site residue. Residues His300 and Asp309 each contribute to the Zn(2+) site.

Belongs to the peptidase M35 family. Zn(2+) serves as cofactor.

Its function is as follows. Heat-labile protease. The chain is Extracellular protease from Aeromonas hydrophila.